A 188-amino-acid polypeptide reads, in one-letter code: Crossover junction endodeoxyribonuclease RuvC (188 aa).

Residues Asp7, Glu68, and Asp141 contribute to the active site. Mg(2+)-binding residues include Asp7, Glu68, and Asp141.

It belongs to the RuvC family. In terms of assembly, homodimer which binds Holliday junction (HJ) DNA. The HJ becomes 2-fold symmetrical on binding to RuvC with unstacked arms; it has a different conformation from HJ DNA in complex with RuvA. In the full resolvosome a probable DNA-RuvA(4)-RuvB(12)-RuvC(2) complex forms which resolves the HJ. Mg(2+) is required as a cofactor.

The protein resides in the cytoplasm. The enzyme catalyses Endonucleolytic cleavage at a junction such as a reciprocal single-stranded crossover between two homologous DNA duplexes (Holliday junction).. Functionally, the RuvA-RuvB-RuvC complex processes Holliday junction (HJ) DNA during genetic recombination and DNA repair. Endonuclease that resolves HJ intermediates. Cleaves cruciform DNA by making single-stranded nicks across the HJ at symmetrical positions within the homologous arms, yielding a 5'-phosphate and a 3'-hydroxyl group; requires a central core of homology in the junction. The consensus cleavage sequence is 5'-(A/T)TT(C/G)-3'. Cleavage occurs on the 3'-side of the TT dinucleotide at the point of strand exchange. HJ branch migration catalyzed by RuvA-RuvB allows RuvC to scan DNA until it finds its consensus sequence, where it cleaves and resolves the cruciform DNA. The sequence is that of Crossover junction endodeoxyribonuclease RuvC from Mycobacterium tuberculosis (strain ATCC 25177 / H37Ra).